The sequence spans 351 residues: Putative aryl-alcohol dehydrogenase C977.14c (351 aa).

S113 carries the post-translational modification Phosphoserine.

The protein belongs to the aldo/keto reductase family. Aldo/keto reductase 2 subfamily.

It localises to the cytoplasm. The protein localises to the nucleus. The protein is Putative aryl-alcohol dehydrogenase C977.14c of Schizosaccharomyces pombe (strain 972 / ATCC 24843) (Fission yeast).